The following is a 282-amino-acid chain: Probable transcription factor At1g66420 (282 aa).

A disordered region spans residues 33–73 (SKKNEEFCGGSGKVQPSEMKRRSEGTSTDMTSKRAKKVSAE).

Belongs to the GeBP family.

This is Probable transcription factor At1g66420 from Arabidopsis thaliana (Mouse-ear cress).